The following is a 153-amino-acid chain: Jacalin-related lectin Calsepa (153 aa).

Ala-2 carries the N-acetylalanine modification. The 147-residue stretch at 6 to 152 (DTISGPWGNN…VDAIGTYNRH (147 aa)) folds into the Jacalin-type lectin domain. N-glycan binding regions lie at residues 17 to 18 (GN), 95 to 96 (DN), and 140 to 144 (GYYVD).

This sequence belongs to the jacalin lectin family. In terms of assembly, homodimer. Not glycosylated. As to expression, rhizome (at protein level). Detected in the cortex and the pith of rhizome. Not detected in vascular tissues, pericycle, endodermis or rhizodermis.

The protein localises to the cytoplasm. Its activity is regulated as follows. Hemagglutinating activity is most inhibited by methyl alpha-mannopyranoside. This activity is inhibited to a less extent (about a third of the inhibition of that of methyl alpha-mannopyranoside) by methyl alpha-glucoside, other alpha-glucosides, such as maltose, isomaltose, panose or palatinose, and alpha-glucosides modified at the second position, such as methyl 2-deoxy-alpha-arabinoglucopyranoside or methyl 2-acetamido-2-deoxy alpha-glucopyranoside. Mildly inhibited by free monosaccharides, with glucose presenting at least 20-fold less inhibitory effect on hemagglutinating activity than mannose. Glycoproteins are somewhat inhibitory, the best being asialothyroglobulin and ovomucoid. Not inhibited by isomaltitol, sucrose or trehalose. In terms of biological role, mannose-binding lectin. Preferentially binds mannose at concentrations ranging between 5 and 25 mM, but also binds glucose. Has a marked preference for methylated sugar derivatives, such as alpha-MeMan and alpha-MeGlc, at concentration down to 5 mM. Binds to N-glycans, but not to glycolipid-type or other type of glycans. Binds N-linked high-mannose-type glycans. Has a preference for smaller (Man(2)-Man(6)) high-mannose-type glycans to larger (Man(7)-Man(9)) ones. Recognizes both alpha1-6 extended and alpha1-3 extended monoantennary glycans. The addition of alpha1-2Man to the Man-alpha1-3Man-beta branch results in a significant loss of affinity, but beta1-2GlcNAc has some affinity. Has less affinity for biantennary glycans. However, affinity is significant for the biantennary complex-type N-glycans with bisecting GlcNAc. No affinity is observed for tri- and tetra-antennary glycans. Binds bisected glycans of the mouse brain. Selectively binds to bisecting N-glycans which are in back-fold conformation, and does not favor a glycan with an extend conformation. Has hemagglutinating activity against rabbit erythrocytes at 0.3 ug/ml and against trypsin-treated human erythrocytes at 5 ug/ml. Has mitogenic activity in murine cells. This chain is Jacalin-related lectin Calsepa, found in Calystegia sepium (Hedge bindweed).